Reading from the N-terminus, the 499-residue chain is MGRCSLLLLLLLIAFLTPGAANPVSPSLRAPSSLPWSTSFRSRPTITLKYSIRYIQQKVDHFGFNIDRTFKQRYLIADNYWKEDGGSILFYTGNEGDIIWFCNNTGFMWDIAEEMKAMLVFAEHRYYGESLPFGADSFSDSRHLNFLTTEQALADFAKLIRYLKRTIPGARNQHVIALGGSYGGMLAAWFRMKYPHLVVGALASSAPIWQFNDLVPCDIFMKIVTTDFSQSGPNCSESIRRSWDAINRLAKKGTGLRWLSEALHLCTPLTKSQDVQRLKDWISETWVNVAMVDYPYESNFLQPLPAWPVKVVCQYFKYSNVPDTVMVQNIFQALNVYYNYSGQAKCLNVSETATSSLGVLGWSYQACTEMVMPTCSDGVDDMFEPHSWNMKEYSDDCFKQWGVRPRPSWIPTMYGGKNISSHTNIIFSNGELDPWSGGGVTKDITDTLLAIVIPNGAHHLDLRASNALDPVSVQLTRSLEVKYMKQWISDFYVRLRKMN.

The first 21 residues, 1–21 (MGRCSLLLLLLLIAFLTPGAA), serve as a signal peptide directing secretion. Positions 22-47 (NPVSPSLRAPSSLPWSTSFRSRPTIT) are excised as a propeptide. N103 carries an N-linked (GlcNAc...) asparagine glycan. The active-site Charge relay system is the S181. The interval 196–337 (HLVVGALASS…QNIFQALNVY (142 aa)) is SKS domain. Intrachain disulfides connect C217/C375, C235/C313, C266/C346, and C367/C397. N234 is a glycosylation site (N-linked (GlcNAc...) asparagine). N-linked (GlcNAc...) asparagine glycans are attached at residues N339 and N348. A glycan (N-linked (GlcNAc...) asparagine) is linked at N418. Residues D433 and H458 each act as charge relay system in the active site.

It belongs to the peptidase S28 family. Homodimer.

The protein localises to the lysosome. It carries out the reaction Cleavage of a -Pro-|-Xaa bond to release a C-terminal amino acid.. Functionally, cleaves C-terminal amino acids linked to proline in peptides such as angiotensin II, III and des-Arg9-bradykinin. This cleavage occurs at acidic pH, but enzymatic activity is retained with some substrates at neutral pH. This chain is Lysosomal Pro-X carboxypeptidase (PRCP), found in Bos taurus (Bovine).